The chain runs to 478 residues: Cytochrome c-552 (478 aa).

The signal sequence occupies residues 1–26; sequence MARKTLRARRFFSLIFPFFFITSVYA. Heme c is bound at residue histidine 94. Residues cysteine 122, cysteine 125, and lysine 126 each coordinate heme. Heme c is bound by residues cysteine 160, cysteine 163, histidine 164, cysteine 209, cysteine 212, and histidine 213. 4 residues coordinate Ca(2+): glutamate 215, tyrosine 216, lysine 261, and glutamine 263. Tyrosine 216 contacts substrate. Histidine 264 lines the substrate pocket. Heme c contacts are provided by histidine 275, cysteine 282, cysteine 285, histidine 286, histidine 301, cysteine 314, cysteine 317, histidine 318, and histidine 393.

The protein belongs to the cytochrome c-552 family. Ca(2+) is required as a cofactor. Heme c serves as cofactor.

The protein localises to the periplasm. The catalysed reaction is 6 Fe(III)-[cytochrome c] + NH4(+) + 2 H2O = 6 Fe(II)-[cytochrome c] + nitrite + 8 H(+). The protein operates within nitrogen metabolism; nitrate reduction (assimilation). Functionally, catalyzes the reduction of nitrite to ammonia, consuming six electrons in the process. This Salmonella agona (strain SL483) protein is Cytochrome c-552.